Here is a 246-residue protein sequence, read N- to C-terminus: Uridylate kinase (246 aa).

13-16 (KLSG) lines the ATP pocket. Gly-54 lines the UMP pocket. 2 residues coordinate ATP: Gly-55 and Arg-59. UMP contacts are provided by residues Asp-74 and 135–142 (AGMPYFST). Positions 163, 169, and 172 each coordinate ATP.

Belongs to the UMP kinase family. Homohexamer.

It is found in the cytoplasm. The catalysed reaction is UMP + ATP = UDP + ADP. It participates in pyrimidine metabolism; CTP biosynthesis via de novo pathway; UDP from UMP (UMPK route): step 1/1. With respect to regulation, inhibited by UTP. Its function is as follows. Catalyzes the reversible phosphorylation of UMP to UDP. This chain is Uridylate kinase, found in Bifidobacterium longum (strain NCC 2705).